Reading from the N-terminus, the 437-residue chain is Serine--tRNA ligase (437 aa).

227–229 (TAE) lines the L-serine pocket. Residues 258–260 (RSE) and valine 274 contribute to the ATP site. Glutamate 281 serves as a coordination point for L-serine. 347-350 (ETHS) provides a ligand contact to ATP. L-serine is bound at residue threonine 382.

It belongs to the class-II aminoacyl-tRNA synthetase family. Type-1 seryl-tRNA synthetase subfamily. Homodimer. The tRNA molecule binds across the dimer.

The protein localises to the cytoplasm. The enzyme catalyses tRNA(Ser) + L-serine + ATP = L-seryl-tRNA(Ser) + AMP + diphosphate + H(+). The catalysed reaction is tRNA(Sec) + L-serine + ATP = L-seryl-tRNA(Sec) + AMP + diphosphate + H(+). The protein operates within aminoacyl-tRNA biosynthesis; selenocysteinyl-tRNA(Sec) biosynthesis; L-seryl-tRNA(Sec) from L-serine and tRNA(Sec): step 1/1. Its function is as follows. Catalyzes the attachment of serine to tRNA(Ser). Is also able to aminoacylate tRNA(Sec) with serine, to form the misacylated tRNA L-seryl-tRNA(Sec), which will be further converted into selenocysteinyl-tRNA(Sec). The polypeptide is Serine--tRNA ligase (Deinococcus geothermalis (strain DSM 11300 / CIP 105573 / AG-3a)).